Consider the following 78-residue polypeptide: Acyl carrier protein (78 aa).

The Carrier domain occupies 1–76 (MAIHPKVKDI…DVASYLEKKG (76 aa)). Residue serine 36 is modified to O-(pantetheine 4'-phosphoryl)serine.

Belongs to the acyl carrier protein (ACP) family. 4'-phosphopantetheine is transferred from CoA to a specific serine of apo-ACP by AcpS. This modification is essential for activity because fatty acids are bound in thioester linkage to the sulfhydryl of the prosthetic group.

The protein resides in the cytoplasm. It functions in the pathway lipid metabolism; fatty acid biosynthesis. Carrier of the growing fatty acid chain in fatty acid biosynthesis. The chain is Acyl carrier protein from Bdellovibrio bacteriovorus (strain ATCC 15356 / DSM 50701 / NCIMB 9529 / HD100).